Consider the following 421-residue polypeptide: MRKPSSGQPAGLDAWDETRSLATHAGPDFALYVGDSLDCLAKLPDESINTVVTSPPYWAVRDYEHDEQLGLEDEVDDYVERLVKIFREVYRVLATDGSAWLNIGDSYFNKQITVGGKPPRTGWKRNKQLSLVPFRVALALQDDGWWIRNVAVWHKPNAMPASVRDRLTVTWEPVFLLTKSERYYFNLDEIRVPHQTSDAIERRRAESGTVTGKAQGKKELRKWLNSPRHRATIEGIKEVERRPNAPAAVELASYLRTALKEKKRSIAWVAEQLDLPFERTRHYFRTDEIGSRLPPPEVWEQLKDLLELDATYDEAMTVEVGDNVFRNHPNGKNPGDLLSIPTAPSGANHFAVMPRKLAHFALKATLPMNGSCLDPFMGSGTTGRVVRELGGRFVGVDVNEHYMTDYLVESGVISPETETLW.

Belongs to the N(4)/N(6)-methyltransferase family. N(4) subfamily.

The enzyme catalyses a 2'-deoxycytidine in DNA + S-adenosyl-L-methionine = an N(4)-methyl-2'-deoxycytidine in DNA + S-adenosyl-L-homocysteine + H(+). Functionally, a beta subtype methylase, recognizes the double-stranded sequence 5'-GGCCNNNNNGGCC-3', methylates C-? on both strands, and protects the DNA from cleavage by the SfiI endonuclease. The protein is Type II methyltransferase M.SfiI of Streptomyces fimbriatus.